The following is a 60-amino-acid chain: MISIEQADKIKELVALIRKADEERINFALSGIEEFEAKVNNAVEALDMFLDEIIDHNTRV.

This is an uncharacterized protein from Enterobacteria phage T4 (Bacteriophage T4).